Reading from the N-terminus, the 249-residue chain is Aspartate/glutamate leucyltransferase (249 aa).

This sequence belongs to the R-transferase family. Bpt subfamily.

The protein resides in the cytoplasm. It catalyses the reaction N-terminal L-glutamyl-[protein] + L-leucyl-tRNA(Leu) = N-terminal L-leucyl-L-glutamyl-[protein] + tRNA(Leu) + H(+). The enzyme catalyses N-terminal L-aspartyl-[protein] + L-leucyl-tRNA(Leu) = N-terminal L-leucyl-L-aspartyl-[protein] + tRNA(Leu) + H(+). In terms of biological role, functions in the N-end rule pathway of protein degradation where it conjugates Leu from its aminoacyl-tRNA to the N-termini of proteins containing an N-terminal aspartate or glutamate. The chain is Aspartate/glutamate leucyltransferase from Xanthobacter autotrophicus (strain ATCC BAA-1158 / Py2).